The primary structure comprises 389 residues: Cytochrome b (389 aa).

The next 4 membrane-spanning stretches (helical) occupy residues 32 to 52 (FGSL…FLAM), 76 to 98 (WLIR…LHIA), 113 to 133 (TWTI…LGYT), and 179 to 199 (FFSL…MHMI). Residues His82 and His96 each contribute to the heme b site. 2 residues coordinate heme b: His183 and His197. His202 contributes to the a ubiquinone binding site. Helical transmembrane passes span 225 to 245 (YLIK…IIIF), 289 to 309 (LFGV…PLLD), 321 to 341 (IGKL…FIGA), and 348 to 368 (YVAI…FFIP).

The protein belongs to the cytochrome b family. In terms of assembly, fungal cytochrome b-c1 complex contains 10 subunits; 3 respiratory subunits, 2 core proteins and 5 low-molecular weight proteins. Cytochrome b-c1 complex is a homodimer. Requires heme b as cofactor.

It localises to the mitochondrion inner membrane. In terms of biological role, component of the ubiquinol-cytochrome c reductase complex (complex III or cytochrome b-c1 complex) that is part of the mitochondrial respiratory chain. The b-c1 complex mediates electron transfer from ubiquinol to cytochrome c. Contributes to the generation of a proton gradient across the mitochondrial membrane that is then used for ATP synthesis. The polypeptide is Cytochrome b (cob) (Schizosaccharomyces japonicus (Fission yeast)).